Consider the following 201-residue polypeptide: MAKEFKQHTGLAVPLDASHVDTDAIIPKQFLQKVTRVGFGAHLFHEWRFLDDEGKQPNPDFVLNFPRYQGASILLARENFGCGSSREHAPWALDDYGIRAIIAPSFADIFYGNSLNNQMLPVRLSEEEVDELFKYVEANEGATITVDLEAQTVSANGKTYHFEIDSFRRHCLLNGLDNIGLTLQHEEKIADYESKIPAFLR.

Belongs to the LeuD family. LeuD type 1 subfamily. Heterodimer of LeuC and LeuD.

It catalyses the reaction (2R,3S)-3-isopropylmalate = (2S)-2-isopropylmalate. It participates in amino-acid biosynthesis; L-leucine biosynthesis; L-leucine from 3-methyl-2-oxobutanoate: step 2/4. Catalyzes the isomerization between 2-isopropylmalate and 3-isopropylmalate, via the formation of 2-isopropylmaleate. In Glaesserella parasuis serovar 5 (strain SH0165) (Haemophilus parasuis), this protein is 3-isopropylmalate dehydratase small subunit.